Here is a 454-residue protein sequence, read N- to C-terminus: UDP-N-acetylmuramoylalanine--D-glutamate ligase (454 aa).

114-120 (GTNGKTT) serves as a coordination point for ATP.

This sequence belongs to the MurCDEF family.

It localises to the cytoplasm. It catalyses the reaction UDP-N-acetyl-alpha-D-muramoyl-L-alanine + D-glutamate + ATP = UDP-N-acetyl-alpha-D-muramoyl-L-alanyl-D-glutamate + ADP + phosphate + H(+). It participates in cell wall biogenesis; peptidoglycan biosynthesis. In terms of biological role, cell wall formation. Catalyzes the addition of glutamate to the nucleotide precursor UDP-N-acetylmuramoyl-L-alanine (UMA). This chain is UDP-N-acetylmuramoylalanine--D-glutamate ligase, found in Desulfitobacterium hafniense (strain DSM 10664 / DCB-2).